The primary structure comprises 629 residues: Smc-like protein Sph1 (629 aa).

2 coiled-coil regions span residues 139–282 (LETE…LLDD) and 318–487 (AETT…NQFD).

The protein belongs to the Sph1/Sph2 family.

The protein resides in the cytoplasm. In terms of biological role, may play a role in a late step of replication. The sequence is that of Smc-like protein Sph1 (sph1) from Halobacterium salinarum (Halobacterium halobium).